We begin with the raw amino-acid sequence, 454 residues long: Ornithine aminotransferase (454 aa).

The residue at position 280 (K280) is an N6-(pyridoxal phosphate)lysine.

It belongs to the class-III pyridoxal-phosphate-dependent aminotransferase family. It depends on pyridoxal 5'-phosphate as a cofactor.

It localises to the cytoplasm. It catalyses the reaction a 2-oxocarboxylate + L-ornithine = L-glutamate 5-semialdehyde + an L-alpha-amino acid. It functions in the pathway amino-acid biosynthesis; L-proline biosynthesis; L-glutamate 5-semialdehyde from L-ornithine: step 1/1. The protein is Ornithine aminotransferase (otaA) of Emericella nidulans (strain FGSC A4 / ATCC 38163 / CBS 112.46 / NRRL 194 / M139) (Aspergillus nidulans).